The chain runs to 131 residues: Ribosome-binding factor A (131 aa).

It belongs to the RbfA family. In terms of assembly, monomer. Binds 30S ribosomal subunits, but not 50S ribosomal subunits or 70S ribosomes.

Its subcellular location is the cytoplasm. Its function is as follows. One of several proteins that assist in the late maturation steps of the functional core of the 30S ribosomal subunit. Associates with free 30S ribosomal subunits (but not with 30S subunits that are part of 70S ribosomes or polysomes). Required for efficient processing of 16S rRNA. May interact with the 5'-terminal helix region of 16S rRNA. This Chromohalobacter salexigens (strain ATCC BAA-138 / DSM 3043 / CIP 106854 / NCIMB 13768 / 1H11) protein is Ribosome-binding factor A.